The following is a 287-amino-acid chain: 4-hydroxybenzoate octaprenyltransferase (287 aa).

6 helical membrane-spanning segments follow: residues 41 to 61 (VSLLVIFALGTILMRSAGCAI), 92 to 112 (VALAAGLSLVAFLLILPLNAL), 133 to 153 (FFAIPQAYLGIAFGFGIPMAF), 160 to 180 (VPLLAWVMLIANVFWSVAYDT), 197 to 217 (TSALTFGRFDVLAIMLCYAVT), and 267 to 287 (NNWLGGALFAGIAAHYAAQAF).

The protein belongs to the UbiA prenyltransferase family. Mg(2+) serves as cofactor.

The protein resides in the cell inner membrane. It catalyses the reaction all-trans-octaprenyl diphosphate + 4-hydroxybenzoate = 4-hydroxy-3-(all-trans-octaprenyl)benzoate + diphosphate. The protein operates within cofactor biosynthesis; ubiquinone biosynthesis. Functionally, catalyzes the prenylation of para-hydroxybenzoate (PHB) with an all-trans polyprenyl group. Mediates the second step in the final reaction sequence of ubiquinone-8 (UQ-8) biosynthesis, which is the condensation of the polyisoprenoid side chain with PHB, generating the first membrane-bound Q intermediate 3-octaprenyl-4-hydroxybenzoate. The polypeptide is 4-hydroxybenzoate octaprenyltransferase (Paraburkholderia phymatum (strain DSM 17167 / CIP 108236 / LMG 21445 / STM815) (Burkholderia phymatum)).